An 873-amino-acid chain; its full sequence is DNA helicase/primase complex-associated protein (873 aa).

The disordered stretch occupies residues 394–422; that stretch reads PPLPRDDGDGENNVVEVSSSTGGAHPPSD.

Belongs to the herpesviridae HEPA family. Associates with the primase and the helicase to form the helicase-primase complex. Interacts with the origin-binding protein. Interacts with the polymerase catalytic subunit.

It localises to the host nucleus. In terms of biological role, component of the helicase/primase complex. Unwinds the DNA at the replication forks and generates single-stranded DNA for both leading and lagging strand synthesis. The primase synthesizes short RNA primers on the lagging strand that the polymerase presumably elongates using dNTPs. The primase-associated factor has no known catalytic activity in the complex and may serve to facilitate the formation of the replisome by directly interacting with the origin-binding protein and the polymerase. The polypeptide is DNA helicase/primase complex-associated protein (UL102) (Homo sapiens (Human)).